The following is a 403-amino-acid chain: Glyceraldehyde-3-phosphate dehydrogenase A, chloroplastic (403 aa).

Residues 1–66 (MASSMLSATT…GGPRRAPTEA (66 aa)) constitute a chloroplast transit peptide. NADP(+) is bound by residues 77-78 (RI), aspartate 102, and arginine 147. Residues 219 to 221 (SCT), threonine 250, arginine 265, 278 to 279 (TG), and arginine 301 each bind D-glyceraldehyde 3-phosphate. Catalysis depends on cysteine 220, which acts as the Nucleophile. Asparagine 383 is a binding site for NADP(+).

The protein belongs to the glyceraldehyde-3-phosphate dehydrogenase family. Tetramer of either four A chains (GAPDH 2) or two A and two B chains (GAPDH 1).

The protein resides in the plastid. It localises to the chloroplast. The enzyme catalyses D-glyceraldehyde 3-phosphate + phosphate + NADP(+) = (2R)-3-phospho-glyceroyl phosphate + NADPH + H(+). The protein operates within carbohydrate biosynthesis; Calvin cycle. The chain is Glyceraldehyde-3-phosphate dehydrogenase A, chloroplastic (GAPA) from Zea mays (Maize).